A 383-amino-acid polypeptide reads, in one-letter code: MGASQKNQELIGGLILFSAALLAIVVNNSPLASYYAMLETINVKLGIENLVIDKNLMHWINDGLMAIYFLYIGLEIKREIIVGTLSKLSNIITPAIAAFAGLAMPSLIYLSINHDIKVINGWAIPSATDIAFTLGILALLGTRVPAKLKLLVITIAIFDDIAAIAIIAIFYTKSLSLLSLSLGTLFILAMIICNRIFKINRSSVYVVLGFFAWFCTIKSGVHATLAGFTTALCIPFRENDKDSPANFMEDSLHPWIIYFILPVFAFANAGISFSGISFSILFEPITLGIIWGLFVGKQLGIFSILAVFKKLKWFKLGESFSNLQLYGISLLCGIGFTMSLFIGVLAFNDTHLLNAIKIGVVVGSVLSGFFGYIVLRFIVTNPS.

11 helical membrane-spanning segments follow: residues 10–30 (LIGG…NNSP), 56–76 (LMHW…GLEI), 91–111 (IITP…IYLS), 121–141 (GWAI…ALLG), 150–170 (LLVI…IAIF), 174–194 (SLSL…IICN), 206–226 (VVLG…ATLA), 254–274 (PWII…ISFS), 289–308 (IIWG…LAVF), 327–347 (GISL…VLAF), and 355–375 (AIKI…YIVL).

Belongs to the NhaA Na(+)/H(+) (TC 2.A.33) antiporter family.

The protein localises to the cell inner membrane. The enzyme catalyses Na(+)(in) + 2 H(+)(out) = Na(+)(out) + 2 H(+)(in). In terms of biological role, na(+)/H(+) antiporter that extrudes sodium in exchange for external protons. In Francisella tularensis subsp. holarctica (strain FTNF002-00 / FTA), this protein is Na(+)/H(+) antiporter NhaA.